Consider the following 162-residue polypeptide: Glutathione peroxidase-like peroxiredoxin 2 (162 aa).

The active-site Cysteine sulfenic acid (-SOH) intermediate is C37. C37 and C83 are disulfide-bonded.

This sequence belongs to the glutathione peroxidase family. As to quaternary structure, monomer.

The protein resides in the cytoplasm. The protein localises to the nucleus. It is found in the mitochondrion outer membrane. It localises to the mitochondrion inner membrane. It carries out the reaction a hydroperoxide + [thioredoxin]-dithiol = an alcohol + [thioredoxin]-disulfide + H2O. Glutathione peroxidase-like protein that protects cells from phospholipid hydroperoxides and nonphospholipid peroxides during oxidative stress. Plays an important role in the oxidative stress-induced response in the presence of Ca(2+). Has peroxidase activity using preferentially thioredoxin as a reducing power. The redox state of the mitochondrial GPX2 is regulated by TRX1 and TRX2 (cytoplasmic thioredoxin), and by TRX3 (mitochondrial matrix thioredoxin). Involved in sporulation. The protein is Glutathione peroxidase-like peroxiredoxin 2 of Saccharomyces cerevisiae (strain ATCC 204508 / S288c) (Baker's yeast).